The following is a 145-amino-acid chain: uncharacterized protein (145 aa).

The first 23 residues, 1–23 (MSSSNLSSRKTRISAHFLDAAPA), serve as a signal peptide directing secretion. A helical membrane pass occupies residues 123-140 (VLLLIIALVFLLFVAIFI).

The protein localises to the membrane. This is an uncharacterized protein from Archaeoglobus fulgidus (strain ATCC 49558 / DSM 4304 / JCM 9628 / NBRC 100126 / VC-16).